A 213-amino-acid polypeptide reads, in one-letter code: Protein-L-isoaspartate O-methyltransferase (213 aa).

S64 is an active-site residue.

Belongs to the methyltransferase superfamily. L-isoaspartyl/D-aspartyl protein methyltransferase family.

Its subcellular location is the cytoplasm. The catalysed reaction is [protein]-L-isoaspartate + S-adenosyl-L-methionine = [protein]-L-isoaspartate alpha-methyl ester + S-adenosyl-L-homocysteine. Functionally, catalyzes the methyl esterification of L-isoaspartyl residues in peptides and proteins that result from spontaneous decomposition of normal L-aspartyl and L-asparaginyl residues. It plays a role in the repair and/or degradation of damaged proteins. The polypeptide is Protein-L-isoaspartate O-methyltransferase (Christiangramia forsetii (strain DSM 17595 / CGMCC 1.15422 / KT0803) (Gramella forsetii)).